Consider the following 447-residue polypeptide: Probable glycine dehydrogenase (decarboxylating) subunit 1 (447 aa).

This sequence belongs to the GcvP family. N-terminal subunit subfamily. The glycine cleavage system is composed of four proteins: P, T, L and H. In this organism, the P 'protein' is a heterodimer of two subunits.

The catalysed reaction is N(6)-[(R)-lipoyl]-L-lysyl-[glycine-cleavage complex H protein] + glycine + H(+) = N(6)-[(R)-S(8)-aminomethyldihydrolipoyl]-L-lysyl-[glycine-cleavage complex H protein] + CO2. The glycine cleavage system catalyzes the degradation of glycine. The P protein binds the alpha-amino group of glycine through its pyridoxal phosphate cofactor; CO(2) is released and the remaining methylamine moiety is then transferred to the lipoamide cofactor of the H protein. The chain is Probable glycine dehydrogenase (decarboxylating) subunit 1 from Metallosphaera sedula (strain ATCC 51363 / DSM 5348 / JCM 9185 / NBRC 15509 / TH2).